The chain runs to 465 residues: Argininosuccinate lyase (465 aa).

The protein belongs to the lyase 1 family. Argininosuccinate lyase subfamily.

Its subcellular location is the cytoplasm. It catalyses the reaction 2-(N(omega)-L-arginino)succinate = fumarate + L-arginine. The protein operates within amino-acid biosynthesis; L-arginine biosynthesis; L-arginine from L-ornithine and carbamoyl phosphate: step 3/3. The protein is Argininosuccinate lyase of Methylococcus capsulatus (strain ATCC 33009 / NCIMB 11132 / Bath).